A 322-amino-acid chain; its full sequence is UDP-galactose transporter homolog 1 (322 aa).

5 consecutive transmembrane segments (helical) span residues 4–24, 43–63, 76–96, 105–125, and 129–149; these read FMRQLFVCMIGIYGSFLSWAV, ALLSLAQSFMTVLCGLLWNWF, FLGYFSSIAISASLSSYFGYA, TVILGKSCKLLPVIALHVFVY, and FPPHKYLIVTMITAGVSIFSY. N-linked (GlcNAc...) asparagine glycosylation is present at Asn152. 4 helical membrane passes run 164–184, 199–219, 250–270, and 290–310; these read SPIGLLLLFFNLLMDGITNTT, MMIAVNLGIACLNGLYLISPF, LFIFFTLEKFGSITLVTITLT, and IQWLGILLVFLGISLEAGLKI. N-linked (GlcNAc...) asparagine glycosylation is found at Asn313 and Asn314.

It belongs to the nucleotide-sugar transporter family. SLC35B subfamily.

It localises to the endoplasmic reticulum membrane. Its function is as follows. May be involved in specific transport of UDP-Gal from the cytosol to the Golgi lumen. Involved in the maintenance of optimal conditions for the folding of secretory pathway proteins in the endoplasmic reticulum. In Schizosaccharomyces pombe (strain 972 / ATCC 24843) (Fission yeast), this protein is UDP-galactose transporter homolog 1 (hut1).